The primary structure comprises 294 residues: Elongation factor Ts (294 aa).

The interval 79–82 is involved in Mg(2+) ion dislocation from EF-Tu; that stretch reads TDFV.

This sequence belongs to the EF-Ts family.

It is found in the cytoplasm. Functionally, associates with the EF-Tu.GDP complex and induces the exchange of GDP to GTP. It remains bound to the aminoacyl-tRNA.EF-Tu.GTP complex up to the GTP hydrolysis stage on the ribosome. The protein is Elongation factor Ts of Geobacillus thermodenitrificans (strain NG80-2).